We begin with the raw amino-acid sequence, 310 residues long: Protoheme IX farnesyltransferase (310 aa).

9 helical membrane passes run 37 to 57 (LITVFAGYVVAASYLTDDVLL), 64 to 84 (LTLLWTLLGSGLVIAGSCYLN), 113 to 133 (ILALGLGILATGTVLLLIVNH), 134 to 154 (VAAVFGLIGSFVYVVIYTMWL), 159 to 181 (TINTVVGGISGAVPPIIGFAAVT), 186 to 208 (IDAWILFLIMFVWQPPHFLALAM), 215 to 237 (RAAGIPMLPVVNGFAITKRQIVW), 257 to 277 (MLVMAVLGGYWLYMGLKGLKI), and 290 to 310 (MFFFSLFYFTAWIVTVVLVSL).

It belongs to the UbiA prenyltransferase family. Protoheme IX farnesyltransferase subfamily. Interacts with CtaA.

It is found in the cell membrane. It catalyses the reaction heme b + (2E,6E)-farnesyl diphosphate + H2O = Fe(II)-heme o + diphosphate. It participates in porphyrin-containing compound metabolism; heme O biosynthesis; heme O from protoheme: step 1/1. Its function is as follows. Converts heme B (protoheme IX) to heme O by substitution of the vinyl group on carbon 2 of heme B porphyrin ring with a hydroxyethyl farnesyl side group. This is Protoheme IX farnesyltransferase from Exiguobacterium sibiricum (strain DSM 17290 / CCUG 55495 / CIP 109462 / JCM 13490 / 255-15).